We begin with the raw amino-acid sequence, 190 residues long: Potassium-transporting ATPase KdpC subunit (190 aa).

A helical transmembrane segment spans residues 10-30; sequence TFIFLLLITGGVYPLLTTVLG.

It belongs to the KdpC family. The system is composed of three essential subunits: KdpA, KdpB and KdpC.

The protein localises to the cell inner membrane. Its function is as follows. Part of the high-affinity ATP-driven potassium transport (or Kdp) system, which catalyzes the hydrolysis of ATP coupled with the electrogenic transport of potassium into the cytoplasm. This subunit acts as a catalytic chaperone that increases the ATP-binding affinity of the ATP-hydrolyzing subunit KdpB by the formation of a transient KdpB/KdpC/ATP ternary complex. The sequence is that of Potassium-transporting ATPase KdpC subunit from Escherichia coli (strain SE11).